The chain runs to 286 residues: Glycine--tRNA ligase alpha subunit (286 aa).

This sequence belongs to the class-II aminoacyl-tRNA synthetase family. Tetramer of two alpha and two beta subunits.

The protein localises to the cytoplasm. It carries out the reaction tRNA(Gly) + glycine + ATP = glycyl-tRNA(Gly) + AMP + diphosphate. The sequence is that of Glycine--tRNA ligase alpha subunit from Campylobacter concisus (strain 13826).